We begin with the raw amino-acid sequence, 100 residues long: uncharacterized protein (100 aa).

This is an uncharacterized protein from Saccharomyces cerevisiae (strain ATCC 204508 / S288c) (Baker's yeast).